We begin with the raw amino-acid sequence, 339 residues long: Anthranilate phosphoribosyltransferase (339 aa).

5-phospho-alpha-D-ribose 1-diphosphate-binding positions include Gly79, 82–83 (GD), Thr87, 89–92 (NIST), 107–115 (KHGNRAVSS), and Ser119. Position 79 (Gly79) interacts with anthranilate. Ser91 provides a ligand contact to Mg(2+). Asn110 lines the anthranilate pocket. An anthranilate-binding site is contributed by Arg165. Residues Asp224 and Glu225 each coordinate Mg(2+).

The protein belongs to the anthranilate phosphoribosyltransferase family. Homodimer. Mg(2+) serves as cofactor.

It carries out the reaction N-(5-phospho-beta-D-ribosyl)anthranilate + diphosphate = 5-phospho-alpha-D-ribose 1-diphosphate + anthranilate. It functions in the pathway amino-acid biosynthesis; L-tryptophan biosynthesis; L-tryptophan from chorismate: step 2/5. Its function is as follows. Catalyzes the transfer of the phosphoribosyl group of 5-phosphorylribose-1-pyrophosphate (PRPP) to anthranilate to yield N-(5'-phosphoribosyl)-anthranilate (PRA). The chain is Anthranilate phosphoribosyltransferase from Geobacillus sp. (strain WCH70).